A 45-amino-acid chain; its full sequence is Large ribosomal subunit protein bL34 (45 aa).

The segment covering 1-10 (MTQRTLGGTN) has biased composition (polar residues). The segment at 1-45 (MTQRTLGGTNRKQKRTSGFRARMRKSNGRKVIQARRKKGRHRLSV) is disordered. The span at 11 to 45 (RKQKRTSGFRARMRKSNGRKVIQARRKKGRHRLSV) shows a compositional bias: basic residues.

This sequence belongs to the bacterial ribosomal protein bL34 family.

The protein is Large ribosomal subunit protein bL34 of Crocosphaera subtropica (strain ATCC 51142 / BH68) (Cyanothece sp. (strain ATCC 51142)).